Reading from the N-terminus, the 671-residue chain is MKRFAALSLAALMLLTVFASAASAVDVIEIRGPVYNGSDIDDIIDTYGDGTILTMDATDFAAFYYDIDDNVTTETLSIEDVPDTEGNVIGEGGLIYETTIQEVEYEYYNPDAGWDNYSLMGFFAEKYIPINPDKADKLSKLILDSDDKYTIRTGEMLDLGEGYAIEAKQVDVDGEKVWLEFTKDGEFVDDEIISVSTADDEANTWDVELDDIEDEDDVIVLKVHVNQVFQGAVDSIAQIEGLWLIDYANAMTIESDDEFGNLDDVSIDGDTLTITNEDTFTLTRDDEEEIGEGLYFATADTPSNVLRFYAMKEITDPGTYEIRGQVASGFGDQSWDASSFAGFYYDIDDNVSTETLTVSDLDGNVIPEGGLVYTTTIADVDFEYYNPDAGWDQYPVMGFFAEEYIPINPDKADKIAKLVLDSDDKYTIRTGEMLDLGEGYAIEAKQVDVDGEKVWLEFTKDGEFVDDEIISVSTADDEANTWDVELDDIEDEDDVVVLKVHVNQVFQGAVDSIAQIEGLWLIDYANAMTIESDDEFGNLDDVSIDGDTLKISNEDTFTLTRDSEEEIGEGMYFMIADTSSSDLRYYPYVEKTIGEEVSGEEETPEETPTGEVTETEGEEETPTEVTETPTEGEPAPEETETTESEGTTPGFGFMFGLVGLLAVVYLVRRNN.

A signal peptide spans 1 to 24 (MKRFAALSLAALMLLTVFASAASA). 4 N-linked (GlcNAc...) asparagine glycosylation sites follow: Asn-36, Asn-70, Asn-116, and Asn-350. A disordered region spans residues 594–650 (GEEVSGEEETPEETPTGEVTETEGEEETPTEVTETPTEGEPAPEETETTESEGTTPG). The span at 613 to 622 (TETEGEEETP) shows a compositional bias: acidic residues. The span at 623-633 (TEVTETPTEGE) shows a compositional bias: low complexity. A compositionally biased stretch (acidic residues) spans 634 to 643 (PAPEETETTE). Residues 647-667 (TTPGFGFMFGLVGLLAVVYLV) form a helical membrane-spanning segment.

It belongs to the Methanosarcinales S-layer protein family. Glycosylated.

The protein resides in the secreted. It localises to the cell wall. It is found in the S-layer. The protein localises to the cell membrane. S-layer protein. The S-layer is a paracrystalline mono-layered assembly of proteins which coat the surface of the cell. The polypeptide is Major S-layer protein (Methanosarcina acetivorans (strain ATCC 35395 / DSM 2834 / JCM 12185 / C2A)).